The following is a 207-amino-acid chain: ATP-dependent Clp protease proteolytic subunit (207 aa).

Residues 1-14 (MSYSGERDNLAPHM) constitute a propeptide that is removed on maturation. The Nucleophile role is filled by serine 111. Residue histidine 136 is part of the active site.

Belongs to the peptidase S14 family. Fourteen ClpP subunits assemble into 2 heptameric rings which stack back to back to give a disk-like structure with a central cavity, resembling the structure of eukaryotic proteasomes. Component of the ClpAP and ClpXP complexes.

Its subcellular location is the cytoplasm. It carries out the reaction Hydrolysis of proteins to small peptides in the presence of ATP and magnesium. alpha-casein is the usual test substrate. In the absence of ATP, only oligopeptides shorter than five residues are hydrolyzed (such as succinyl-Leu-Tyr-|-NHMec, and Leu-Tyr-Leu-|-Tyr-Trp, in which cleavage of the -Tyr-|-Leu- and -Tyr-|-Trp bonds also occurs).. Cleaves peptides in various proteins in a process that requires ATP hydrolysis. Has a chymotrypsin-like activity. Plays a major role in the degradation of misfolded proteins. The sequence is that of ATP-dependent Clp protease proteolytic subunit from Salmonella paratyphi A (strain ATCC 9150 / SARB42).